The following is a 177-amino-acid chain: MSRVAKAPVSIPASVEVKLDGQLLTVKGKNGELSRTIHNSVEVKQDNNQLTFSPRVGIANADAQSGTARALVNAMVIGVNEGFTKKLQLVGVGYRAQMKGNVLVLSLGFSHPIDHVLPAGVTAECPSQTEIVLKSADKQLIGQVAADIRAYRRPEPYKGKGVRYADEVVRMKEAKKK.

Belongs to the universal ribosomal protein uL6 family. As to quaternary structure, part of the 50S ribosomal subunit.

This protein binds to the 23S rRNA, and is important in its secondary structure. It is located near the subunit interface in the base of the L7/L12 stalk, and near the tRNA binding site of the peptidyltransferase center. The polypeptide is Large ribosomal subunit protein uL6 (Histophilus somni (strain 129Pt) (Haemophilus somnus)).